Here is a 187-residue protein sequence, read N- to C-terminus: CASP-like protein 3A2 (187 aa).

The Cytoplasmic portion of the chain corresponds to Met-1–Gln-24. The chain crosses the membrane as a helical span at residues Val-25–Ala-45. Residues Thr-46–Gln-71 are Extracellular-facing. Asn-63 is a glycosylation site (N-linked (GlcNAc...) asparagine). A helical membrane pass occupies residues Tyr-72 to Val-92. The Cytoplasmic portion of the chain corresponds to Tyr-93–Gln-107. Residues Ala-108–Ala-128 traverse the membrane as a helical segment. The Extracellular segment spans residues Gly-129–Ser-162. Residue Asn-136 is glycosylated (N-linked (GlcNAc...) asparagine). Residues Leu-163–Val-183 traverse the membrane as a helical segment. Residues Leu-184 to Pro-187 are Cytoplasmic-facing.

This sequence belongs to the Casparian strip membrane proteins (CASP) family. As to quaternary structure, homodimer and heterodimers.

It is found in the cell membrane. This is CASP-like protein 3A2 from Arabidopsis thaliana (Mouse-ear cress).